Consider the following 360-residue polypeptide: Phospho-N-acetylmuramoyl-pentapeptide-transferase (360 aa).

The next 10 helical transmembrane spans lie at 21–41 (YITV…LWIG), 73–93 (TMGG…WANL), 94–114 (ANPY…IGFV), 132–152 (WKYF…YWLG), 168–188 (IMPQ…VGTG), 199–219 (GLAI…AWAT), 239–259 (VVVF…FNTY), 263–283 (VFMG…VAIL), 288–308 (FLLV…ILQV), and 338–358 (VIIR…VTLK).

The protein belongs to the glycosyltransferase 4 family. MraY subfamily. It depends on Mg(2+) as a cofactor.

The protein resides in the cell inner membrane. It catalyses the reaction UDP-N-acetyl-alpha-D-muramoyl-L-alanyl-gamma-D-glutamyl-meso-2,6-diaminopimeloyl-D-alanyl-D-alanine + di-trans,octa-cis-undecaprenyl phosphate = di-trans,octa-cis-undecaprenyl diphospho-N-acetyl-alpha-D-muramoyl-L-alanyl-D-glutamyl-meso-2,6-diaminopimeloyl-D-alanyl-D-alanine + UMP. The protein operates within cell wall biogenesis; peptidoglycan biosynthesis. Catalyzes the initial step of the lipid cycle reactions in the biosynthesis of the cell wall peptidoglycan: transfers peptidoglycan precursor phospho-MurNAc-pentapeptide from UDP-MurNAc-pentapeptide onto the lipid carrier undecaprenyl phosphate, yielding undecaprenyl-pyrophosphoryl-MurNAc-pentapeptide, known as lipid I. The polypeptide is Phospho-N-acetylmuramoyl-pentapeptide-transferase (Haemophilus influenzae (strain ATCC 51907 / DSM 11121 / KW20 / Rd)).